The chain runs to 428 residues: Kynureninase (428 aa).

Pyridoxal 5'-phosphate contacts are provided by residues Thr104, Thr105, 132 to 135, Asp213, His216, and Tyr238; that span reads FPSD. Lys239 carries the post-translational modification N6-(pyridoxal phosphate)lysine. 2 residues coordinate pyridoxal 5'-phosphate: Trp267 and Thr295.

The protein belongs to the kynureninase family. Homodimer. Pyridoxal 5'-phosphate serves as cofactor.

The catalysed reaction is L-kynurenine + H2O = anthranilate + L-alanine + H(+). The enzyme catalyses 3-hydroxy-L-kynurenine + H2O = 3-hydroxyanthranilate + L-alanine + H(+). It functions in the pathway amino-acid degradation; L-kynurenine degradation; L-alanine and anthranilate from L-kynurenine: step 1/1. It participates in cofactor biosynthesis; NAD(+) biosynthesis; quinolinate from L-kynurenine: step 2/3. Its function is as follows. Catalyzes the cleavage of L-kynurenine (L-Kyn) and L-3-hydroxykynurenine (L-3OHKyn) into anthranilic acid (AA) and 3-hydroxyanthranilic acid (3-OHAA), respectively. This chain is Kynureninase, found in Bacillus cereus (strain ATCC 14579 / DSM 31 / CCUG 7414 / JCM 2152 / NBRC 15305 / NCIMB 9373 / NCTC 2599 / NRRL B-3711).